A 67-amino-acid chain; its full sequence is Large ribosomal subunit protein uL29 (67 aa).

The protein belongs to the universal ribosomal protein uL29 family.

The protein is Large ribosomal subunit protein uL29 of Gemmatimonas aurantiaca (strain DSM 14586 / JCM 11422 / NBRC 100505 / T-27).